Consider the following 208-residue polypeptide: N-(5'-phosphoribosyl)anthranilate isomerase (208 aa).

The protein belongs to the TrpF family.

The catalysed reaction is N-(5-phospho-beta-D-ribosyl)anthranilate = 1-(2-carboxyphenylamino)-1-deoxy-D-ribulose 5-phosphate. It functions in the pathway amino-acid biosynthesis; L-tryptophan biosynthesis; L-tryptophan from chorismate: step 3/5. The polypeptide is N-(5'-phosphoribosyl)anthranilate isomerase (Staphylococcus haemolyticus (strain JCSC1435)).